A 192-amino-acid chain; its full sequence is dTTP/UTP pyrophosphatase (192 aa).

Asp-75 (proton acceptor) is an active-site residue.

This sequence belongs to the Maf family. YhdE subfamily. Requires a divalent metal cation as cofactor.

The protein localises to the cytoplasm. It carries out the reaction dTTP + H2O = dTMP + diphosphate + H(+). The enzyme catalyses UTP + H2O = UMP + diphosphate + H(+). In terms of biological role, nucleoside triphosphate pyrophosphatase that hydrolyzes dTTP and UTP. May have a dual role in cell division arrest and in preventing the incorporation of modified nucleotides into cellular nucleic acids. This Pelodictyon phaeoclathratiforme (strain DSM 5477 / BU-1) protein is dTTP/UTP pyrophosphatase.